The primary structure comprises 263 residues: Leukocyte-associated immunoglobulin-like receptor 1 (263 aa).

The signal sequence occupies residues 1–21; sequence MSLHPVILLVLVLCLGWKINT. The Extracellular portion of the chain corresponds to 22–144; it reads QEGSLPDITI…TSWLKTYSIY (123 aa). An Ig-like C2-type domain is found at 27 to 115; it reads PDITIFPNSS…TWSERSKTLE (89 aa). Residues N34 and N90 are each glycosylated (N-linked (GlcNAc...) asparagine). C49 and C99 form a disulfide bridge. A helical membrane pass occupies residues 145-165; sequence IFTVVSVIFLLCLSALLFCFL. Residues 166-263 are Cytoplasmic-facing; it reads RHRQKKQGLP…SSTYAAIIRH (98 aa). 2 consecutive short sequence motifs (ITIM motif) follow at residues 226–231 and 255–260; these read VTYIQL and STYAAI. Y228 and Y257 each carry phosphotyrosine.

Interacts with SH2 domains of tyrosine-protein phosphatases PTPN6 and PTPN11. The interaction with PTPN6 is constitutive. Interacts with the SH2 domain of CSK. Binds with high affinity to extracellular matrix collagens, the interaction is functionally important. Phosphorylation at Tyr-228 and Tyr-257 activates it. May be phosphorylated by LCK. Post-translationally, N-glycosylated. As to expression, expressed in lymphoid organs and in cell lines of hemopoietic origin.

The protein localises to the cell membrane. Functions as an inhibitory receptor that plays a constitutive negative regulatory role on cytolytic function of natural killer (NK) cells, B-cells and T-cells. Activation by Tyr phosphorylation results in recruitment and activation of the phosphatases PTPN6 and PTPN11. It also reduces the increase of intracellular calcium evoked by B-cell receptor ligation. May also play its inhibitory role independently of SH2-containing phosphatases. Modulates cytokine production in CD4+ T-cells, down-regulating IL2 and IFNG production while inducing secretion of transforming growth factor beta. Also down-regulates IgG and IgE production in B-cells as well as IL8, IL10 and TNF secretion. Inhibits proliferation and induces apoptosis in myeloid leukemia cell lines as well as prevents nuclear translocation of NF-kappa-B p65 subunit/RELA and phosphorylation of I-kappa-B alpha/CHUK in these cells. Inhibits the differentiation of peripheral blood precursors towards dendritic cells. The chain is Leukocyte-associated immunoglobulin-like receptor 1 (Lair1) from Mus musculus (Mouse).